Reading from the N-terminus, the 281-residue chain is E3 ubiquitin-protein ligase MARCHF5 (281 aa).

An RING-CH-type zinc finger spans residues 9 to 78 (LPQTMDRSCW…PQCNAEYLIV (70 aa)). Residues cysteine 17, cysteine 20, cysteine 36, cysteine 38, histidine 46, cysteine 49, cysteine 68, and cysteine 71 each contribute to the Zn(2+) site. The next 4 helical transmembrane spans lie at 102-122 (FAAA…YGAV), 142-162 (PLFL…GKMI), 212-232 (ILCG…LMFS), and 241-261 (TILG…YFKQ).

The protein localises to the mitochondrion outer membrane. Its subcellular location is the endoplasmic reticulum membrane. The enzyme catalyses S-ubiquitinyl-[E2 ubiquitin-conjugating enzyme]-L-cysteine + [acceptor protein]-L-lysine = [E2 ubiquitin-conjugating enzyme]-L-cysteine + N(6)-ubiquitinyl-[acceptor protein]-L-lysine.. It participates in protein modification; protein ubiquitination. In terms of biological role, mitochondrial E3 ubiquitin-protein ligase that plays a crucial role in the control of mitochondrial morphology by acting as a positive regulator of mitochondrial fission. May play a role in the prevention of cell senescence acting as a regulator of mitochondrial quality control. The sequence is that of E3 ubiquitin-protein ligase MARCHF5 (MARCHF5) from Gallus gallus (Chicken).